The chain runs to 216 residues: Ribonuclease T (216 aa).

An Exonuclease domain is found at Val-28–Phe-202. Asp-31, Glu-33, His-189, and Asp-194 together coordinate Mg(2+). His-189 serves as the catalytic Proton donor/acceptor.

The protein belongs to the RNase T family. Homodimer. Mg(2+) serves as cofactor.

Functionally, trims short 3' overhangs of a variety of RNA species, leaving a one or two nucleotide 3' overhang. Responsible for the end-turnover of tRNA: specifically removes the terminal AMP residue from uncharged tRNA (tRNA-C-C-A). Also appears to be involved in tRNA biosynthesis. The sequence is that of Ribonuclease T from Xanthomonas campestris pv. campestris (strain 8004).